Consider the following 522-residue polypeptide: 2-isopropylmalate synthase (522 aa).

A Pyruvate carboxyltransferase domain is found at 5–267; the sequence is VIIFDTTLRD…ETGINAKEIH (263 aa). Asp14, His202, His204, and Asn238 together coordinate Mn(2+). The interval 392-522 is regulatory domain; it reads QLQQLVVQSD…MHKNRELGGV (131 aa).

This sequence belongs to the alpha-IPM synthase/homocitrate synthase family. LeuA type 1 subfamily. As to quaternary structure, homodimer. Requires Mn(2+) as cofactor.

It is found in the cytoplasm. It catalyses the reaction 3-methyl-2-oxobutanoate + acetyl-CoA + H2O = (2S)-2-isopropylmalate + CoA + H(+). It functions in the pathway amino-acid biosynthesis; L-leucine biosynthesis; L-leucine from 3-methyl-2-oxobutanoate: step 1/4. Catalyzes the condensation of the acetyl group of acetyl-CoA with 3-methyl-2-oxobutanoate (2-ketoisovalerate) to form 3-carboxy-3-hydroxy-4-methylpentanoate (2-isopropylmalate). This chain is 2-isopropylmalate synthase, found in Shewanella sp. (strain MR-7).